The sequence spans 122 residues: Holo-[acyl-carrier-protein] synthase (122 aa).

Aspartate 8 and glutamate 56 together coordinate Mg(2+).

Belongs to the P-Pant transferase superfamily. AcpS family. It depends on Mg(2+) as a cofactor.

Its subcellular location is the cytoplasm. It catalyses the reaction apo-[ACP] + CoA = holo-[ACP] + adenosine 3',5'-bisphosphate + H(+). Transfers the 4'-phosphopantetheine moiety from coenzyme A to a Ser of acyl-carrier-protein. This Streptomyces griseus subsp. griseus (strain JCM 4626 / CBS 651.72 / NBRC 13350 / KCC S-0626 / ISP 5235) protein is Holo-[acyl-carrier-protein] synthase.